Reading from the N-terminus, the 204-residue chain is Probable proteasome subunit beta type-3 (204 aa).

It belongs to the peptidase T1B family. As to quaternary structure, the 26S proteasome consists of a 20S proteasome core and two 19S regulatory subunits. The 20S proteasome core is composed of 28 subunits that are arranged in four stacked rings, resulting in a barrel-shaped structure. The two end rings are each formed by seven alpha subunits, and the two central rings are each formed by seven beta subunits. The catalytic chamber with the active sites is on the inside of the barrel.

The protein localises to the cytoplasm. It is found in the nucleus. Functionally, non-catalytic component of the proteasome, a multicatalytic proteinase complex which is characterized by its ability to cleave peptides with Arg, Phe, Tyr, Leu, and Glu adjacent to the leaving group at neutral or slightly basic pH. The proteasome has an ATP-dependent proteolytic activity. This chain is Probable proteasome subunit beta type-3 (pup3), found in Schizosaccharomyces pombe (strain 972 / ATCC 24843) (Fission yeast).